Consider the following 346-residue polypeptide: Phosphoribosylformylglycinamidine cyclo-ligase (346 aa).

The protein belongs to the AIR synthase family.

It is found in the cytoplasm. The enzyme catalyses 2-formamido-N(1)-(5-O-phospho-beta-D-ribosyl)acetamidine + ATP = 5-amino-1-(5-phospho-beta-D-ribosyl)imidazole + ADP + phosphate + H(+). Its pathway is purine metabolism; IMP biosynthesis via de novo pathway; 5-amino-1-(5-phospho-D-ribosyl)imidazole from N(2)-formyl-N(1)-(5-phospho-D-ribosyl)glycinamide: step 2/2. The chain is Phosphoribosylformylglycinamidine cyclo-ligase from Bacillus mycoides (strain KBAB4) (Bacillus weihenstephanensis).